A 370-amino-acid polypeptide reads, in one-letter code: Death-associated protein kinase 2 (370 aa).

Positions Y23–I285 constitute a Protein kinase domain. ATP-binding positions include L29–V37 and K52. The Proton acceptor role is filled by D149. The calmodulin-binding stretch occupies residues Q277–L344. Residues Q292–V301 form an autoinhibitory domain region. Residue S299 is modified to Phosphoserine. The residue at position 318 (S318) is a Phosphoserine; by autocatalysis. The tract at residues E348–S370 is disordered. S349 is modified (phosphoserine). A compositionally biased stretch (basic residues) spans R358 to S370. At T369 the chain carries Phosphothreonine; by PKB/AKT1.

It belongs to the protein kinase superfamily. CAMK Ser/Thr protein kinase family. DAP kinase subfamily. Homodimer in its autoinhibited state. Active as monomer. Isoform 2 but not isoform 1 can interact with ATF4. Interacts with 14-3-3 proteins YWHAB, YWHAE, YWHAG, YWHAH, YWHAQ, YWHAZ and SFN; the interaction requires DAPK2 phosphorylation at Thr-369 and suppresses DAPK2 kinase activity and DAPK2-induced apoptosis. The cofactor is Mg(2+). In terms of processing, autophosphorylation at Ser-318 inhibits its catalytic activity. Dephosphorylated at Ser-318 in response to activated Fas and TNF-alpha receptors. In terms of tissue distribution, expressed in neutrophils and eosinophils. Isoform 2 is expressed in embryonic stem cells (at protein level). Isoform 1 is ubiquitously expressed in all tissue types examined with high levels in heart, lung and skeletal muscle.

Its subcellular location is the cytoplasm. The protein resides in the cytoplasmic vesicle. The protein localises to the autophagosome lumen. It carries out the reaction L-seryl-[protein] + ATP = O-phospho-L-seryl-[protein] + ADP + H(+). The enzyme catalyses L-threonyl-[protein] + ATP = O-phospho-L-threonyl-[protein] + ADP + H(+). Activated by Ca(2+)/calmodulin. Regulated by a double locking mechanism, involving autophosphorylation at Ser-318, calmodulin binding, and dimerization. In the inactive state, Ser-318 is phosphorylated, and the kinase is dimeric. Activation involves: dephosphorylation at Ser-318, release-of-autoinhibition mechanism where calmodulin binding induces a conformational change that relieves the steric block of the active site by the autoinhibitory domain, and generation of the monomeric active form of the kinase. Calcium/calmodulin-dependent serine/threonine kinase involved in multiple cellular signaling pathways that trigger cell survival, apoptosis, and autophagy. Regulates both type I apoptotic and type II autophagic cell death signals, depending on the cellular setting. The former is caspase-dependent, while the latter is caspase-independent and is characterized by the accumulation of autophagic vesicles. Acts as a mediator of anoikis and a suppressor of beta-catenin-dependent anchorage-independent growth of malignant epithelial cells. May play a role in granulocytic maturation. Regulates granulocytic motility by controlling cell spreading and polarization. Functionally, isoform 2 is not regulated by calmodulin. It can phosphorylate MYL9. It can induce membrane blebbing and autophagic cell death. In Homo sapiens (Human), this protein is Death-associated protein kinase 2 (DAPK2).